Reading from the N-terminus, the 395-residue chain is ATP phosphoribosyltransferase regulatory subunit (395 aa).

This sequence belongs to the class-II aminoacyl-tRNA synthetase family. HisZ subfamily. In terms of assembly, heteromultimer composed of HisG and HisZ subunits.

The protein resides in the cytoplasm. The protein operates within amino-acid biosynthesis; L-histidine biosynthesis; L-histidine from 5-phospho-alpha-D-ribose 1-diphosphate: step 1/9. Its function is as follows. Required for the first step of histidine biosynthesis. May allow the feedback regulation of ATP phosphoribosyltransferase activity by histidine. The protein is ATP phosphoribosyltransferase regulatory subunit of Pseudomonas fluorescens (strain ATCC BAA-477 / NRRL B-23932 / Pf-5).